The chain runs to 282 residues: Putative phosphatase MPN_383 (282 aa).

Aspartate 11 serves as the catalytic Nucleophile. Residue aspartate 11 coordinates Mg(2+). A phosphate-binding site is contributed by leucine 12. Aspartate 13 is a Mg(2+) binding site. Phosphate-binding positions include 45–46 (TG) and lysine 207. Mg(2+) is bound at residue aspartate 230. Position 233 (asparagine 233) interacts with phosphate.

This sequence belongs to the HAD-like hydrolase superfamily. Cof family. Mg(2+) serves as cofactor.

In Mycoplasma pneumoniae (strain ATCC 29342 / M129 / Subtype 1) (Mycoplasmoides pneumoniae), this protein is Putative phosphatase MPN_383.